Here is a 715-residue protein sequence, read N- to C-terminus: Phosphatidylinositol 4-phosphate 5-kinase 6 (715 aa).

The segment covering 1–13 (MSVAHADDADDYS) has biased composition (basic and acidic residues). The segment at 1 to 21 (MSVAHADDADDYSRPTGESYH) is disordered. MORN repeat units lie at residues 32 to 54 (YTGQWRDNLPHGHGKYLWTDGCM), 55 to 77 (YVGDWHRGKTMGKGRFSWPSGAT), 78 to 100 (YEGDFKNGYMDGKGTYIDSSGDL), 101 to 123 (YRGSWVMNLRHGQGTKSYVNGDC), 124 to 146 (YDGEWRRGLQDGHGRYQWKNENH), 147 to 169 (YIGQWKNGLMNGNGTMIWSNGNR), 170 to 192 (YDGSWEDGAPKGNGTFRWSDGSF), and 193 to 214 (YVGVWSKDPKEQNGTYYPSTSS). The segment at 253–306 (GASEQSSSGNRTKNSERPRRRSVDGRVSNGEMELRSNGSGYLQVDDNAESTRSS) is disordered. The span at 255 to 264 (SEQSSSGNRT) shows a compositional bias: polar residues. The segment covering 265-276 (KNSERPRRRSVD) has biased composition (basic and acidic residues). The PIPK domain maps to 321–711 (TISKGHKNYE…RFRDFIFRVF (391 aa)). The tract at residues 671 to 692 (YDISKKLEHAYKSMQYDPTSIS) is activation loop.

It carries out the reaction a 1,2-diacyl-sn-glycero-3-phospho-(1D-myo-inositol 4-phosphate) + ATP = a 1,2-diacyl-sn-glycero-3-phospho-(1D-myo-inositol-4,5-bisphosphate) + ADP + H(+). The sequence is that of Phosphatidylinositol 4-phosphate 5-kinase 6 (PIP5K6) from Arabidopsis thaliana (Mouse-ear cress).